Consider the following 183-residue polypeptide: MASSMISSGTVATVSADRPAPAQARMVAPFNGLKSSSAFPVTRKSNDITSIASNGGRVQCMQVWPPLGLKKFETLSYLPPLSSESLAKEVDYLLRKNWVPCLEFELETGFVYRENHRSPGYYDGRYWTMWKLPMFGCTDSSQVLKELEEAKKAYPQSFIRIIGFDNVRQVQCISFIAYKPAGF.

Residues 1–59 (MASSMISSGTVATVSADRPAPAQARMVAPFNGLKSSSAFPVTRKSNDITSIASNGGRVQ) constitute a chloroplast transit peptide.

Belongs to the RuBisCO small chain family. Heterohexadecamer of 8 large and 8 small subunits.

It is found in the plastid. The protein resides in the chloroplast. In terms of biological role, ruBisCO catalyzes two reactions: the carboxylation of D-ribulose 1,5-bisphosphate, the primary event in carbon dioxide fixation, as well as the oxidative fragmentation of the pentose substrate. Both reactions occur simultaneously and in competition at the same active site. Although the small subunit is not catalytic it is essential for maximal activity. This is Ribulose bisphosphate carboxylase small subunit, chloroplastic from Pyrus pyrifolia (Chinese pear).